Here is a 159-residue protein sequence, read N- to C-terminus: 6,7-dimethyl-8-ribityllumazine synthase (159 aa).

5-amino-6-(D-ribitylamino)uracil is bound by residues W26, 57-59, and 79-81; these read ALE and CVI. Position 84–85 (84–85) interacts with (2S)-2-hydroxy-3-oxobutyl phosphate; that stretch reads GT. H87 (proton donor) is an active-site residue. Position 112 (N112) interacts with 5-amino-6-(D-ribitylamino)uracil. R126 provides a ligand contact to (2S)-2-hydroxy-3-oxobutyl phosphate.

The protein belongs to the DMRL synthase family.

The catalysed reaction is (2S)-2-hydroxy-3-oxobutyl phosphate + 5-amino-6-(D-ribitylamino)uracil = 6,7-dimethyl-8-(1-D-ribityl)lumazine + phosphate + 2 H2O + H(+). The protein operates within cofactor biosynthesis; riboflavin biosynthesis; riboflavin from 2-hydroxy-3-oxobutyl phosphate and 5-amino-6-(D-ribitylamino)uracil: step 1/2. In terms of biological role, catalyzes the formation of 6,7-dimethyl-8-ribityllumazine by condensation of 5-amino-6-(D-ribitylamino)uracil with 3,4-dihydroxy-2-butanone 4-phosphate. This is the penultimate step in the biosynthesis of riboflavin. This is 6,7-dimethyl-8-ribityllumazine synthase from Corynebacterium efficiens (strain DSM 44549 / YS-314 / AJ 12310 / JCM 11189 / NBRC 100395).